A 1206-amino-acid chain; its full sequence is DNA polymerase (1206 aa).

Belongs to the DNA polymerase type-B family.

It catalyses the reaction DNA(n) + a 2'-deoxyribonucleoside 5'-triphosphate = DNA(n+1) + diphosphate. In Pyramimonas orientalis virus (PoV01), this protein is DNA polymerase (dpo).